A 332-amino-acid polypeptide reads, in one-letter code: Formamidase (332 aa).

The CN hydrolase domain maps to 14-259 (FLTALIQYPV…WEIVTAEVYP (246 aa)). Catalysis depends on Glu-60, which acts as the Proton acceptor. Lys-132 serves as the catalytic Proton donor. Residue Cys-165 is the Nucleophile of the active site.

The protein belongs to the carbon-nitrogen hydrolase superfamily. Aliphatic amidase family.

It carries out the reaction formamide + H2O = formate + NH4(+). Functionally, is an aliphatic amidase with a restricted substrate specificity, as it only hydrolyzes formamide. The polypeptide is Formamidase (Bacillus thuringiensis (strain Al Hakam)).